Here is a 266-residue protein sequence, read N- to C-terminus: MRLIPLTTAEQVGKWAARHIVNRINAFKPTADRPFVLGLPTGGTPMTTYKALVEMHKAGQVSFKHVVTFNMDEYVGLPKEHPESYYSFMHRNFFDHVDIPAENINLLNGNAPDIDAECRQYEEKIRSYGKIHLFMGGVGNDGHIAFNEPASSLASRTRIKTLTHDTRVANSRFFDNDVNQVPKYALTVGVGTLLDAEEVMIMVLGSQKALALQAAVEGCVNHMWTISCLQLHPKAIMVCDEPSTMELKVKTLRYFNELEAENIKGL.

Asp-72 functions as the Proton acceptor; for enolization step in the catalytic mechanism. Asp-141 (for ring-opening step) is an active-site residue. Residue His-143 is the Proton acceptor; for ring-opening step of the active site. Residue Glu-148 is the For ring-opening step of the active site.

This sequence belongs to the glucosamine/galactosamine-6-phosphate isomerase family. NagB subfamily. In terms of assembly, homohexamer; trimer of disulfide-linked dimers.

The enzyme catalyses alpha-D-glucosamine 6-phosphate + H2O = beta-D-fructose 6-phosphate + NH4(+). It functions in the pathway amino-sugar metabolism; N-acetylneuraminate degradation; D-fructose 6-phosphate from N-acetylneuraminate: step 5/5. Its activity is regulated as follows. Allosterically activated by N-acetylglucosamine 6-phosphate (GlcNAc6P). In terms of biological role, catalyzes the reversible isomerization-deamination of glucosamine 6-phosphate (GlcN6P) to form fructose 6-phosphate (Fru6P) and ammonium ion. This Shigella flexneri serotype 5b (strain 8401) protein is Glucosamine-6-phosphate deaminase.